Here is a 140-residue protein sequence, read N- to C-terminus: Nucleoside diphosphate kinase (140 aa).

ATP contacts are provided by lysine 11, phenylalanine 59, arginine 87, threonine 93, arginine 104, and asparagine 114. The active-site Pros-phosphohistidine intermediate is histidine 117.

The protein belongs to the NDK family. As to quaternary structure, homotetramer. Mg(2+) is required as a cofactor.

The protein resides in the cytoplasm. The catalysed reaction is a 2'-deoxyribonucleoside 5'-diphosphate + ATP = a 2'-deoxyribonucleoside 5'-triphosphate + ADP. It catalyses the reaction a ribonucleoside 5'-diphosphate + ATP = a ribonucleoside 5'-triphosphate + ADP. In terms of biological role, major role in the synthesis of nucleoside triphosphates other than ATP. The ATP gamma phosphate is transferred to the NDP beta phosphate via a ping-pong mechanism, using a phosphorylated active-site intermediate. This chain is Nucleoside diphosphate kinase, found in Bartonella henselae (strain ATCC 49882 / DSM 28221 / CCUG 30454 / Houston 1) (Rochalimaea henselae).